The following is a 296-amino-acid chain: Acetylglutamate kinase (296 aa).

Substrate is bound by residues Gly67–Gly68, Arg89, and Asn194.

Belongs to the acetylglutamate kinase family. ArgB subfamily.

The protein localises to the cytoplasm. The catalysed reaction is N-acetyl-L-glutamate + ATP = N-acetyl-L-glutamyl 5-phosphate + ADP. It functions in the pathway amino-acid biosynthesis; L-arginine biosynthesis; N(2)-acetyl-L-ornithine from L-glutamate: step 2/4. Catalyzes the ATP-dependent phosphorylation of N-acetyl-L-glutamate. The chain is Acetylglutamate kinase from Brucella anthropi (strain ATCC 49188 / DSM 6882 / CCUG 24695 / JCM 21032 / LMG 3331 / NBRC 15819 / NCTC 12168 / Alc 37) (Ochrobactrum anthropi).